Reading from the N-terminus, the 400-residue chain is NAD-dependent protein deacetylase sirtuin-7 (400 aa).

The tract at residues 1–28 (MAAGGLSRSERKAAERVRRLREEQQRER) is disordered. Positions 8 to 28 (RSERKAAERVRRLREEQQRER) are enriched in basic and acidic residues. The Deacetylase sirtuin-type domain occupies 82–329 (PEELQRKVRE…QLLMDELGLE (248 aa)). Residues 107 to 126 (GAGI…NGVW) and 167 to 170 (QNCD) each bind NAD(+). Catalysis depends on H187, which acts as the Proton acceptor. Residues C195, C198, C225, and C228 each contribute to the Zn(2+) site. NAD(+) is bound by residues 268 to 270 (GSS), 297 to 299 (NLQ), and C315. The segment at 354–380 (SHSRKSLCRSREEPGPGDRGAPLSSAP) is disordered. R388 is subject to Asymmetric dimethylarginine; alternate. At R388 the chain carries Omega-N-methylarginine; alternate.

It belongs to the sirtuin family. Class IV subfamily. In terms of assembly, interacts with UBTF and the RNA polymerase I complex. Interacts with components of the B-WICH complex, such as MYBBP1A, SMARCA5/SNF2H and BAZ1B/WSTF. Interacts with ELK4, leading to stabilization at target promoters for H3K18Ac deacetylation. Interacts with histone H2A and/or histone H2B. Interacts with DNMT1. Interacts with SIRT1. Zn(2+) is required as a cofactor. Post-translationally, phosphorylated during mitosis. Methylation at Arg-388 by PRMT6 inhibits the H3K18Ac histone deacetylase activity, promoting mitochondria biogenesis and maintaining mitochondria respiration. In terms of processing, ubiquitinated via 'Lys-63'-linked ubiquitin chains. Deubiquitinated by USP7, inhibiting the H3K18Ac histone deacetylase activity and regulating gluconeogenesis. Ubiquitinated by E3 ubiquitin-protein ligase complex containing FBXO7; leading to proteasomal degradation.

It localises to the nucleus. Its subcellular location is the nucleolus. The protein resides in the nucleoplasm. The protein localises to the chromosome. It is found in the cytoplasm. The enzyme catalyses N(6)-acetyl-L-lysyl-[protein] + NAD(+) + H2O = 2''-O-acetyl-ADP-D-ribose + nicotinamide + L-lysyl-[protein]. The catalysed reaction is N(6)-glutaryl-L-lysyl-[protein] + NAD(+) + H2O = 2''-O-glutaryl-ADP-D-ribose + nicotinamide + L-lysyl-[protein]. It carries out the reaction N(6)-succinyl-L-lysyl-[protein] + NAD(+) + H2O = 2''-O-succinyl-ADP-D-ribose + nicotinamide + L-lysyl-[protein]. It catalyses the reaction N(6)-propanoyl-L-lysyl-[protein] + NAD(+) + H2O = 3''-O-propanoyl-ADP-D-ribose + nicotinamide + L-lysyl-[protein]. The enzyme catalyses N(6)-decanoyl-L-lysyl-[protein] + NAD(+) + H2O = 2''-O-decanoyl-ADP-D-ribose + nicotinamide + L-lysyl-[protein]. NAD-dependent protein-lysine deacetylase and deacylase activities are activated by nucleic acids. Histone deacetylase activity is activated by DNA. Protein-lysine deacylase activity is activated by RNA. H3K18Ac histone deacetylase activity is inhibited by methylation at Arg-388. H3K18Ac histone deacetylase activity is inhibited by deubiquitination by USP7. Its function is as follows. NAD-dependent protein-lysine deacylase that can act both as a deacetylase or deacylase (desuccinylase, depropionylase, deglutarylase and dedecanoylase), depending on the context. Specifically mediates deacetylation of histone H3 at 'Lys-18' (H3K18Ac). In contrast to other histone deacetylases, displays strong preference for a specific histone mark, H3K18Ac, directly linked to control of gene expression. H3K18Ac is mainly present around the transcription start site of genes and has been linked to activation of nuclear hormone receptors; SIRT7 thereby acts as a transcription repressor. Moreover, H3K18 hypoacetylation has been reported as a marker of malignancy in various cancers and seems to maintain the transformed phenotype of cancer cells. Also able to mediate deacetylation of histone H3 at 'Lys-36' (H3K36Ac) in the context of nucleosomes. Also mediates deacetylation of non-histone proteins, such as ATM, CDK9, DDX21, DDB1, FBL, FKBP5/FKBP51, GABPB1, RAN, RRP9/U3-55K and POLR1E/PAF53. Enriched in nucleolus where it stimulates transcription activity of the RNA polymerase I complex. Acts by mediating the deacetylation of the RNA polymerase I subunit POLR1E/PAF53, thereby promoting the association of RNA polymerase I with the rDNA promoter region and coding region. In response to metabolic stress, SIRT7 is released from nucleoli leading to hyperacetylation of POLR1E/PAF53 and decreased RNA polymerase I transcription. Required to restore the transcription of ribosomal RNA (rRNA) at the exit from mitosis. Promotes pre-ribosomal RNA (pre-rRNA) cleavage at the 5'-terminal processing site by mediating deacetylation of RRP9/U3-55K, a core subunit of the U3 snoRNP complex. Mediates 'Lys-37' deacetylation of Ran, thereby regulating the nuclear export of NF-kappa-B subunit RELA/p65. Acts as a regulator of DNA damage repair by mediating deacetylation of ATM during the late stages of DNA damage response, promoting ATM dephosphorylation and deactivation. Suppresses the activity of the DCX (DDB1-CUL4-X-box) E3 ubiquitin-protein ligase complexes by mediating deacetylation of DDB1, which prevents the interaction between DDB1 and CUL4 (CUL4A or CUL4B). Activates RNA polymerase II transcription by mediating deacetylation of CDK9, thereby promoting 'Ser-2' phosphorylation of the C-terminal domain (CTD) of RNA polymerase II. Deacetylates FBL, promoting histone-glutamine methyltransferase activity of FBL. Acts as a regulator of mitochondrial function by catalyzing deacetylation of GABPB1. Regulates Akt/AKT1 activity by mediating deacetylation of FKBP5/FKBP51. Required to prevent R-loop-associated DNA damage and transcription-associated genomic instability by mediating deacetylation and subsequent activation of DDX21, thereby overcoming R-loop-mediated stalling of RNA polymerases. In addition to protein deacetylase activity, also acts as a protein-lysine deacylase. Acts as a protein depropionylase by mediating depropionylation of Osterix (SP7), thereby regulating bone formation by osteoblasts. Acts as a histone deglutarylase by mediating deglutarylation of histone H4 on 'Lys-91' (H4K91glu); a mark that destabilizes nucleosomes by promoting dissociation of the H2A-H2B dimers from nucleosomes. Acts as a histone desuccinylase: in response to DNA damage, recruited to DNA double-strand breaks (DSBs) and catalyzes desuccinylation of histone H3 on 'Lys-122' (H3K122succ), thereby promoting chromatin condensation and DSB repair. Also promotes DSB repair by promoting H3K18Ac deacetylation, regulating non-homologous end joining (NHEJ). Along with its role in DNA repair, required for chromosome synapsis during prophase I of female meiosis by catalyzing H3K18Ac deacetylation. Involved in transcriptional repression of LINE-1 retrotransposon via H3K18Ac deacetylation, and promotes their association with the nuclear lamina. Required to stabilize ribosomal DNA (rDNA) heterochromatin and prevent cellular senescence induced by rDNA instability. Acts as a negative regulator of SIRT1 by preventing autodeacetylation of SIRT1, restricting SIRT1 deacetylase activity. The sequence is that of NAD-dependent protein deacetylase sirtuin-7 (SIRT7) from Bos taurus (Bovine).